Consider the following 201-residue polypeptide: Potassium-transporting ATPase KdpC subunit (201 aa).

The chain crosses the membrane as a helical span at residues 7-27 (PAFVVLIALTALTGLAYPLAM).

It belongs to the KdpC family. As to quaternary structure, the system is composed of three essential subunits: KdpA, KdpB and KdpC.

It localises to the cell inner membrane. Functionally, part of the high-affinity ATP-driven potassium transport (or Kdp) system, which catalyzes the hydrolysis of ATP coupled with the electrogenic transport of potassium into the cytoplasm. This subunit acts as a catalytic chaperone that increases the ATP-binding affinity of the ATP-hydrolyzing subunit KdpB by the formation of a transient KdpB/KdpC/ATP ternary complex. The sequence is that of Potassium-transporting ATPase KdpC subunit from Xanthobacter autotrophicus (strain ATCC BAA-1158 / Py2).